The chain runs to 367 residues: tRNA uridine(34) hydroxylase (367 aa).

The Rhodanese domain occupies 159 to 253; it reads EDENSIVVDV…YAHEVSQKGL (95 aa). Residue Cys-213 is the Cysteine persulfide intermediate of the active site.

Belongs to the TrhO family.

The catalysed reaction is uridine(34) in tRNA + AH2 + O2 = 5-hydroxyuridine(34) in tRNA + A + H2O. Its function is as follows. Catalyzes oxygen-dependent 5-hydroxyuridine (ho5U) modification at position 34 in tRNAs. The polypeptide is tRNA uridine(34) hydroxylase (Leptospira interrogans serogroup Icterohaemorrhagiae serovar Lai (strain 56601)).